Reading from the N-terminus, the 301-residue chain is Probable 5-dehydro-4-deoxyglucarate dehydratase (301 aa).

This sequence belongs to the DapA family.

The enzyme catalyses 5-dehydro-4-deoxy-D-glucarate + H(+) = 2,5-dioxopentanoate + CO2 + H2O. Its pathway is carbohydrate acid metabolism; D-glucarate degradation; 2,5-dioxopentanoate from D-glucarate: step 2/2. This Rhizobium meliloti (strain 1021) (Ensifer meliloti) protein is Probable 5-dehydro-4-deoxyglucarate dehydratase.